The following is a 460-amino-acid chain: Argininosuccinate lyase (460 aa).

It belongs to the lyase 1 family. Argininosuccinate lyase subfamily.

Its subcellular location is the cytoplasm. The enzyme catalyses 2-(N(omega)-L-arginino)succinate = fumarate + L-arginine. It functions in the pathway amino-acid biosynthesis; L-arginine biosynthesis; L-arginine from L-ornithine and carbamoyl phosphate: step 3/3. The sequence is that of Argininosuccinate lyase from Nitratidesulfovibrio vulgaris (strain DSM 19637 / Miyazaki F) (Desulfovibrio vulgaris).